The primary structure comprises 397 residues: Argininosuccinate synthase (397 aa).

Residue 9–17 (AYSGGLDTS) coordinates ATP. Tyrosine 85 contributes to the L-citrulline binding site. Position 115 (glycine 115) interacts with ATP. Positions 117, 121, and 122 each coordinate L-aspartate. Residue asparagine 121 participates in L-citrulline binding. 4 residues coordinate L-citrulline: arginine 125, serine 173, glutamate 258, and tyrosine 270.

The protein belongs to the argininosuccinate synthase family. Type 1 subfamily. Homotetramer.

The protein localises to the cytoplasm. The catalysed reaction is L-citrulline + L-aspartate + ATP = 2-(N(omega)-L-arginino)succinate + AMP + diphosphate + H(+). The protein operates within amino-acid biosynthesis; L-arginine biosynthesis; L-arginine from L-ornithine and carbamoyl phosphate: step 2/3. The polypeptide is Argininosuccinate synthase (Streptococcus suis (strain 05ZYH33)).